Reading from the N-terminus, the 519-residue chain is Lysine 5,6-aminomutase alpha subunit (519 aa).

An adenosylcob(III)alamin-binding site is contributed by 57–59 (DEV). Pyridoxal 5'-phosphate is bound by residues 187 to 192 (RTTGQS), Ser241, Tyr266, Arg271, and Asn302.

This sequence belongs to the KamD family. Heterotetramer of 2 alpha and 2 beta subunits. It depends on adenosylcob(III)alamin as a cofactor. Requires pyridoxal 5'-phosphate as cofactor.

The enzyme catalyses (3S)-3,6-diaminohexanoate = (3S,5S)-3,5-diaminohexanoate. The catalysed reaction is D-lysine = (2R,5S)-2,5-diaminohexanoate. Its pathway is amino-acid metabolism; lysine degradation. Its activity is regulated as follows. Rapidly inactivated in the presence of D-lysine and to a lesser extent in the absence of adenosylcobalamin (Adocbl). Activity is stable in the presence of Adocbl when D-lysine is absent. Adocbl imparts thermal stability at 37 degrees Celsius. Functionally, catalyzes the migration of the L-beta-lysine and D-lysine epsilon amino group to the delta carbon to produce 3,5-diaminohexanoate and 2,5-diaminohexanoate, respectively. In Acetoanaerobium sticklandii (strain ATCC 12662 / DSM 519 / JCM 1433 / CCUG 9281 / NCIMB 10654 / HF) (Clostridium sticklandii), this protein is Lysine 5,6-aminomutase alpha subunit (kamD).